The chain runs to 356 residues: S-adenosylmethionine:tRNA ribosyltransferase-isomerase (356 aa).

Belongs to the QueA family. As to quaternary structure, monomer.

The protein resides in the cytoplasm. It carries out the reaction 7-aminomethyl-7-carbaguanosine(34) in tRNA + S-adenosyl-L-methionine = epoxyqueuosine(34) in tRNA + adenine + L-methionine + 2 H(+). Its pathway is tRNA modification; tRNA-queuosine biosynthesis. In terms of biological role, transfers and isomerizes the ribose moiety from AdoMet to the 7-aminomethyl group of 7-deazaguanine (preQ1-tRNA) to give epoxyqueuosine (oQ-tRNA). The protein is S-adenosylmethionine:tRNA ribosyltransferase-isomerase of Histophilus somni (strain 2336) (Haemophilus somnus).